A 158-amino-acid polypeptide reads, in one-letter code: U-limacoditoxin(8)-Dv66 (158 aa).

Positions M1 to T24 are cleaved as a signal peptide. A propeptide spanning residues R25–R32 is cleaved from the precursor. 2 repeat units span residues G33–R78 and G79–R124. The interval G33–K158 is 3 X 46 AA tandem repeats. Proline amide is present on P63. Residues G64–R78 constitute a propeptide that is removed on maturation. Residues A101–E120 form a disordered region. P109 is subject to Proline amide. A propeptide spanning residues G110–R124 is cleaved from the precursor. A 3; half-length repeat occupies G125–K158. Position 155 is a proline amide (P155).

Belongs to the diuretic hormone class 2 family. As to expression, expressed by the venom secretory cell of the spine. The spine is a cuticular structure containing a single large nucleated venom-secreting cell at its base. It is an independent unit capable of producing, storing and injecting venom. On the back of D.vulnerans caterpillars, spines are grouped together by 50 to 100 to form scoli, of which there are eight in D.vulnerans.

The protein resides in the secreted. In terms of biological role, probable toxin. Does not show insecticidal, antimicrobial and antiparasitic activities. Does not induce increase in intracellular calcium in mouse DRG neurons, suggesting that it does not induce pain. This Doratifera vulnerans (Mottled cup moth) protein is U-limacoditoxin(8)-Dv66.